We begin with the raw amino-acid sequence, 158 residues long: Cyclic pyranopterin monophosphate synthase (158 aa).

Substrate-binding positions include 75–77 (LCH) and 113–114 (ME). Aspartate 128 is an active-site residue.

The protein belongs to the MoaC family. Homohexamer; trimer of dimers.

It catalyses the reaction (8S)-3',8-cyclo-7,8-dihydroguanosine 5'-triphosphate = cyclic pyranopterin phosphate + diphosphate. It participates in cofactor biosynthesis; molybdopterin biosynthesis. Its function is as follows. Catalyzes the conversion of (8S)-3',8-cyclo-7,8-dihydroguanosine 5'-triphosphate to cyclic pyranopterin monophosphate (cPMP). The protein is Cyclic pyranopterin monophosphate synthase of Ralstonia pickettii (strain 12J).